The following is a 340-amino-acid chain: Putative transport protein AF_1800 (340 aa).

Helical transmembrane passes span 7 to 27, 57 to 77, 140 to 160, 193 to 213, 225 to 245, 260 to 280, and 290 to 310; these read LVLL…FTPL, SVIA…YGLI, TLLI…LADM, LWFG…PFFL, GLMF…ILPV, FLLI…RPYF, and LVLM…GFFI.

The protein belongs to the autoinducer-2 exporter (AI-2E) (TC 2.A.86) family.

It is found in the cell membrane. This Archaeoglobus fulgidus (strain ATCC 49558 / DSM 4304 / JCM 9628 / NBRC 100126 / VC-16) protein is Putative transport protein AF_1800.